Consider the following 670-residue polypeptide: Segment polarity protein dishevelled homolog DVL-1 (670 aa).

Positions 1 to 85 (MAETKIIYHM…RVVSWLVLAE (85 aa)) constitute a DIX domain. Positions 89 to 237 (SDAGSQGTDS…LRQADRASSF (149 aa)) are disordered. Residues 142 to 151 (SHRRERARRR) are compositionally biased toward basic residues. Basic and acidic residues predominate over residues 152–171 (NREEAARTNGHPRGDRRRDV). Residues 176–192 (DSASTALSSELESSSFV) are compositionally biased toward low complexity. Ser-194 carries the post-translational modification Phosphoserine. Residues 200–214 (TSRLSSSTEQSTSSR) show a composition bias toward low complexity. The span at 215–228 (LIRKHKRRRRKQRL) shows a compositional bias: basic residues. The region spanning 251–323 (TVTLNMERHH…NDDAVRVLRE (73 aa)) is the PDZ domain. One can recognise a DEP domain in the interval 400-474 (PDSGLEIRDR…SEQCYYVFGD (75 aa)). Positions 518 to 642 (PGPPPCFPPA…PGGPPVRELA (125 aa)) are disordered. The span at 526–555 (PAYQDPGFSYGSGSTGSQQSEGSKSSGSTR) shows a compositional bias: low complexity. The span at 600–611 (SRGSSPRSQASA) shows a compositional bias: polar residues.

Belongs to the DSH family. As to quaternary structure, interacts with CXXC4. Interacts (via PDZ domain) with NXN. Interacts with BRD7 and INVS. Interacts (via PDZ domain) with VANGL1 and VANGL2 (via C-terminus). Interacts with ARRB1; the interaction is enhanced by phosphorylation of DVL1. Interacts with CYLD. Interacts (via PDZ domain) with RYK. Self-associates (via DIX domain) and forms higher homooligomers. Interacts (via PDZ domain) with DACT1 and FZD7, where DACT1 and FZD7 compete for the same binding site. Interacts (via DEP domain) with MUSK; the interaction is direct and mediates the formation a DVL1, MUSK and PAK1 ternary complex involved in AChR clustering. Interacts (via PDZ domain) with TMEM88. Interacts with DCDC2. Interacts with FOXK2. Interacts with PKD1 (via extracellular domain). Interacts (via PDZ domain) with CCDC88C/DAPLE; competes with CCDC88C for binding to frizzled receptor FZD7 and dissociates from CCDC88C following initiation of non-canonical Wnt signaling when CCDC88C displaces DVL1 from ligand-activated FZD7. In terms of processing, ubiquitinated; undergoes both 'Lys-48'-linked ubiquitination, leading to its subsequent degradation by the ubiquitin-proteasome pathway, and 'Lys-63'-linked ubiquitination. The interaction with INVS is required for ubiquitination. Deubiquitinated by CYLD, which acts on 'Lys-63'-linked ubiquitin chains.

It is found in the cell membrane. The protein resides in the cytoplasm. Its subcellular location is the cytosol. It localises to the cytoplasmic vesicle. Functionally, participates in Wnt signaling by binding to the cytoplasmic C-terminus of frizzled family members and transducing the Wnt signal to down-stream effectors. Plays a role both in canonical and non-canonical Wnt signaling. Plays a role in the signal transduction pathways mediated by multiple Wnt genes. Required for LEF1 activation upon WNT1 and WNT3A signaling. DVL1 and PAK1 form a ternary complex with MUSK which is important for MUSK-dependent regulation of AChR clustering during the formation of the neuromuscular junction (NMJ). This Pan troglodytes (Chimpanzee) protein is Segment polarity protein dishevelled homolog DVL-1 (DVL1).